The sequence spans 382 residues: GDP-mannose-dependent alpha-(1-6)-phosphatidylinositol monomannoside mannosyltransferase (382 aa).

GDP-alpha-D-mannose is bound by residues arginine 200, lysine 205, isoleucine 257, and glutamate 294.

The protein belongs to the glycosyltransferase group 1 family. Glycosyltransferase 4 subfamily.

The enzyme catalyses a 1,2-diacyl-sn-glycero-3-phospho-[alpha-D-mannopyranosyl-(1&lt;-&gt;6)-D-myo-inositol] + GDP-alpha-D-mannose = a 2,6-O-bis(alpha-D-mannopyranosyl)-1-phosphatidyl-1D-myo-inositol + GDP + H(+). It catalyses the reaction a 1,2-diacyl-sn-glycero-3-phospho-[alpha-D-6-acyl-mannopyranosyl-(1&lt;-&gt;6)-D-myo-inositol] + GDP-alpha-D-mannose = a 2-O-(alpha-D-mannosyl)-6-O-(6-O-acyl-alpha-D-mannosyl)-1-phosphatidyl-1D-myo-inositol + GDP + H(+). The protein operates within phospholipid metabolism; phosphatidylinositol metabolism. Functionally, involved in the biosynthesis of phosphatidyl-myo-inositol mannosides (PIM) which are early precursors in the biosynthesis of lipomannans (LM) and lipoarabinomannans (LAM). Catalyzes the addition of a mannosyl residue from GDP-D-mannose (GDP-Man) to the position 6 of a phosphatidyl-myo-inositol bearing an alpha-1,2-linked mannose residue (PIM1) to generate phosphatidyl-myo-inositol bearing alpha-1,2- and alpha-1,6-linked mannose residues (Ac1PIM2). PimB also catalyzes the addition of a mannosyl residue from GDP-Man to the position 6 of phosphatidyl-myo-inositol bearing an acylated alpha-1,2-linked mannose residue (Ac1PIM1) to generate monoacylated phosphatidyl-myo-inositol bearing alpha-1,2- and alpha-1,6-linked mannose residues (Ac1PIM2). The addition of the second mannosyl residue by PimB preferentially occurs before the acylation of the mannosyl residue transferred by PimA. Also able to transfer a mannosyl residue from GDP-Man to the position 6 of a phosphatidyl-myo-inositol (PI), but this reaction is very slow. The sequence is that of GDP-mannose-dependent alpha-(1-6)-phosphatidylinositol monomannoside mannosyltransferase from Mycolicibacterium smegmatis (strain ATCC 700084 / mc(2)155) (Mycobacterium smegmatis).